A 286-amino-acid polypeptide reads, in one-letter code: MSAQILDGKAIAAELREQVRKQVEARVERGGRRPGLAVVLVGADPASTVYVGKKRQACEQLGMHSSAHELPAETTQDELLALVDELNGRDEIDGILVQLPLPDHIDEQTVIDRIHPDKDVDGFHPVNMGRLTLRLPGLRPCTPNGVMTMLAHAGIELEGKDAVIIGQSNIVGRPMAMELLNARCTITICHSRTRNLADRVRAADIVVAAVGRPGFVPGDWIKPGAVVIDVGINRLESGKLTGDVDFAAARELAGWITPVPGGVGPMTVATLMANTLAAAEARDSRA.

NADP(+) contacts are provided by residues Gly166 to Ser168, Ser191, and Ile232.

Belongs to the tetrahydrofolate dehydrogenase/cyclohydrolase family. In terms of assembly, homodimer.

It catalyses the reaction (6R)-5,10-methylene-5,6,7,8-tetrahydrofolate + NADP(+) = (6R)-5,10-methenyltetrahydrofolate + NADPH. It carries out the reaction (6R)-5,10-methenyltetrahydrofolate + H2O = (6R)-10-formyltetrahydrofolate + H(+). The protein operates within one-carbon metabolism; tetrahydrofolate interconversion. In terms of biological role, catalyzes the oxidation of 5,10-methylenetetrahydrofolate to 5,10-methenyltetrahydrofolate and then the hydrolysis of 5,10-methenyltetrahydrofolate to 10-formyltetrahydrofolate. This chain is Bifunctional protein FolD, found in Alkalilimnicola ehrlichii (strain ATCC BAA-1101 / DSM 17681 / MLHE-1).